The chain runs to 439 residues: Serine--tRNA ligase (439 aa).

Position 242-244 (242-244 (TAE)) interacts with L-serine. Residue 273–275 (RQE) coordinates ATP. E296 contacts L-serine. 360–363 (EISS) contributes to the ATP binding site. S396 contributes to the L-serine binding site.

It belongs to the class-II aminoacyl-tRNA synthetase family. Type-1 seryl-tRNA synthetase subfamily. Homodimer. The tRNA molecule binds across the dimer.

The protein resides in the cytoplasm. It catalyses the reaction tRNA(Ser) + L-serine + ATP = L-seryl-tRNA(Ser) + AMP + diphosphate + H(+). It carries out the reaction tRNA(Sec) + L-serine + ATP = L-seryl-tRNA(Sec) + AMP + diphosphate + H(+). It participates in aminoacyl-tRNA biosynthesis; selenocysteinyl-tRNA(Sec) biosynthesis; L-seryl-tRNA(Sec) from L-serine and tRNA(Sec): step 1/1. Functionally, catalyzes the attachment of serine to tRNA(Ser). Is also able to aminoacylate tRNA(Sec) with serine, to form the misacylated tRNA L-seryl-tRNA(Sec), which will be further converted into selenocysteinyl-tRNA(Sec). This Oenococcus oeni (strain ATCC BAA-331 / PSU-1) protein is Serine--tRNA ligase.